Reading from the N-terminus, the 1123-residue chain is Telomerase reverse transcriptase (1123 aa).

Disordered stretches follow at residues 191-242 (ENKR…KTTK) and 410-439 (GTTS…PKCP). Residues 201 to 210 (QPPTKRQWLS) are compositionally biased toward polar residues. The region spanning 596-929 (LVDDAEAESS…PFVRWTGLLI (334 aa)) is the Reverse transcriptase domain. 3 residues coordinate Mg(2+): aspartate 691, aspartate 860, and aspartate 861.

This sequence belongs to the reverse transcriptase family. Telomerase subfamily. In terms of assembly, component of the telomerase ribonucleoprotein complex. Interacts with POT1A.

The protein localises to the nucleus. Its subcellular location is the chromosome. It localises to the telomere. The catalysed reaction is DNA(n) + a 2'-deoxyribonucleoside 5'-triphosphate = DNA(n+1) + diphosphate. Its function is as follows. Telomerase is a ribonucleoprotein enzyme essential for the replication of chromosome termini in most eukaryotes. It elongates telomeres. It is a reverse transcriptase that adds simple sequence repeats to chromosome ends by copying a template sequence within the RNA component of the enzyme. Required to prevent genome instability induced by breakage-fusion-bridge (BFB) cycles. Can extend completely non-telomeric sequences using RNA template in vitro. The sequence is that of Telomerase reverse transcriptase (TERT) from Arabidopsis thaliana (Mouse-ear cress).